The following is a 491-amino-acid chain: Serine hydroxymethyltransferase (491 aa).

(6S)-5,6,7,8-tetrahydrofolate contacts are provided by residues leucine 173 and 177–179 (GHL). Lysine 285 bears the N6-(pyridoxal phosphate)lysine mark.

Belongs to the SHMT family. In terms of assembly, homodimer. The cofactor is pyridoxal 5'-phosphate.

It is found in the cytoplasm. The catalysed reaction is (6R)-5,10-methylene-5,6,7,8-tetrahydrofolate + glycine + H2O = (6S)-5,6,7,8-tetrahydrofolate + L-serine. It participates in one-carbon metabolism; tetrahydrofolate interconversion. It functions in the pathway amino-acid biosynthesis; glycine biosynthesis; glycine from L-serine: step 1/1. Catalyzes the reversible interconversion of serine and glycine with tetrahydrofolate (THF) serving as the one-carbon carrier. This reaction serves as the major source of one-carbon groups required for the biosynthesis of purines, thymidylate, methionine, and other important biomolecules. Also exhibits THF-independent aldolase activity toward beta-hydroxyamino acids, producing glycine and aldehydes, via a retro-aldol mechanism. This Cutibacterium acnes (strain DSM 16379 / KPA171202) (Propionibacterium acnes) protein is Serine hydroxymethyltransferase.